Reading from the N-terminus, the 273-residue chain is 2,3,4,5-tetrahydropyridine-2,6-dicarboxylate N-succinyltransferase (273 aa).

2 residues coordinate substrate: arginine 104 and aspartate 141.

Belongs to the transferase hexapeptide repeat family. As to quaternary structure, homotrimer.

It localises to the cytoplasm. It carries out the reaction (S)-2,3,4,5-tetrahydrodipicolinate + succinyl-CoA + H2O = (S)-2-succinylamino-6-oxoheptanedioate + CoA. It participates in amino-acid biosynthesis; L-lysine biosynthesis via DAP pathway; LL-2,6-diaminopimelate from (S)-tetrahydrodipicolinate (succinylase route): step 1/3. This Nitrosomonas eutropha (strain DSM 101675 / C91 / Nm57) protein is 2,3,4,5-tetrahydropyridine-2,6-dicarboxylate N-succinyltransferase.